A 534-amino-acid chain; its full sequence is Chaperonin GroEL, chloroplastic (534 aa).

Residues Thr29–Pro32, Asp86–Thr90, Gly414, and Asp496 contribute to the ATP site.

The protein belongs to the chaperonin (HSP60) family. In terms of assembly, forms a cylinder of 14 subunits composed of two heptameric rings stacked back-to-back. Interacts with the co-chaperonin GroES.

The protein localises to the plastid. It localises to the chloroplast. The enzyme catalyses ATP + H2O + a folded polypeptide = ADP + phosphate + an unfolded polypeptide.. Its function is as follows. Together with its co-chaperonin GroES, plays an essential role in assisting protein folding. The GroEL-GroES system forms a nano-cage that allows encapsulation of the non-native substrate proteins and provides a physical environment optimized to promote and accelerate protein folding. The sequence is that of Chaperonin GroEL, chloroplastic from Galdieria sulphuraria (Red alga).